The sequence spans 160 residues: Crossover junction endodeoxyribonuclease RuvC (160 aa).

Active-site residues include Asp-7, Glu-70, and Asp-142. Asp-7, Glu-70, and Asp-142 together coordinate Mg(2+).

It belongs to the RuvC family. In terms of assembly, homodimer which binds Holliday junction (HJ) DNA. The HJ becomes 2-fold symmetrical on binding to RuvC with unstacked arms; it has a different conformation from HJ DNA in complex with RuvA. In the full resolvosome a probable DNA-RuvA(4)-RuvB(12)-RuvC(2) complex forms which resolves the HJ. Mg(2+) is required as a cofactor.

It localises to the cytoplasm. The catalysed reaction is Endonucleolytic cleavage at a junction such as a reciprocal single-stranded crossover between two homologous DNA duplexes (Holliday junction).. Functionally, the RuvA-RuvB-RuvC complex processes Holliday junction (HJ) DNA during genetic recombination and DNA repair. Endonuclease that resolves HJ intermediates. Cleaves cruciform DNA by making single-stranded nicks across the HJ at symmetrical positions within the homologous arms, yielding a 5'-phosphate and a 3'-hydroxyl group; requires a central core of homology in the junction. The consensus cleavage sequence is 5'-(A/T)TT(C/G)-3'. Cleavage occurs on the 3'-side of the TT dinucleotide at the point of strand exchange. HJ branch migration catalyzed by RuvA-RuvB allows RuvC to scan DNA until it finds its consensus sequence, where it cleaves and resolves the cruciform DNA. The polypeptide is Crossover junction endodeoxyribonuclease RuvC (Ehrlichia ruminantium (strain Gardel)).